We begin with the raw amino-acid sequence, 726 residues long: Penicillin-binding protein 1A (726 aa).

Residues 1 to 3 (MKK) are Cytoplasmic-facing. The chain crosses the membrane as a helical; Signal-anchor for type II membrane protein span at residues 4 to 24 (LVIGILGIVIALFVGLLVFLI). Topologically, residues 25-726 (PIYKNLPDPK…SDLNAILGLR (702 aa)) are periplasmic. The segment at 45-213 (SEVYDAKGRL…AKYNPFYHPE (169 aa)) is transglycosylase. Glu83 functions as the Proton donor; for transglycosylase activity in the catalytic mechanism. Positions 379-662 (KYLGGNRAEI…SRVALPIWID (284 aa)) are transpeptidase. Ser432 (acyl-ester intermediate; for transpeptidase activity) is an active-site residue.

The protein in the N-terminal section; belongs to the glycosyltransferase 51 family. It in the C-terminal section; belongs to the transpeptidase family.

The protein localises to the cell inner membrane. It carries out the reaction [GlcNAc-(1-&gt;4)-Mur2Ac(oyl-L-Ala-gamma-D-Glu-L-Lys-D-Ala-D-Ala)](n)-di-trans,octa-cis-undecaprenyl diphosphate + beta-D-GlcNAc-(1-&gt;4)-Mur2Ac(oyl-L-Ala-gamma-D-Glu-L-Lys-D-Ala-D-Ala)-di-trans,octa-cis-undecaprenyl diphosphate = [GlcNAc-(1-&gt;4)-Mur2Ac(oyl-L-Ala-gamma-D-Glu-L-Lys-D-Ala-D-Ala)](n+1)-di-trans,octa-cis-undecaprenyl diphosphate + di-trans,octa-cis-undecaprenyl diphosphate + H(+). The catalysed reaction is Preferential cleavage: (Ac)2-L-Lys-D-Ala-|-D-Ala. Also transpeptidation of peptidyl-alanyl moieties that are N-acyl substituents of D-alanine.. It functions in the pathway cell wall biogenesis; peptidoglycan biosynthesis. This chain is Penicillin-binding protein 1A (mrcA), found in Aquifex aeolicus (strain VF5).